We begin with the raw amino-acid sequence, 479 residues long: ATP-dependent protease ATPase subunit HslU (479 aa).

ATP is bound by residues Ile-32, 74–79 (GVGKTE), Asp-290, Glu-355, and Arg-427.

It belongs to the ClpX chaperone family. HslU subfamily. In terms of assembly, a double ring-shaped homohexamer of HslV is capped on each side by a ring-shaped HslU homohexamer. The assembly of the HslU/HslV complex is dependent on binding of ATP.

Its subcellular location is the cytoplasm. In terms of biological role, ATPase subunit of a proteasome-like degradation complex; this subunit has chaperone activity. The binding of ATP and its subsequent hydrolysis by HslU are essential for unfolding of protein substrates subsequently hydrolyzed by HslV. HslU recognizes the N-terminal part of its protein substrates and unfolds these before they are guided to HslV for hydrolysis. The chain is ATP-dependent protease ATPase subunit HslU from Leptospira interrogans serogroup Icterohaemorrhagiae serovar copenhageni (strain Fiocruz L1-130).